The following is a 278-amino-acid chain: Purine nucleoside phosphorylase YlmD (278 aa).

Zn(2+)-binding residues include His87, Cys132, and His149.

This sequence belongs to the purine nucleoside phosphorylase YfiH/LACC1 family. Homodimer. Cu(2+) serves as cofactor. It depends on Zn(2+) as a cofactor.

The enzyme catalyses adenosine + phosphate = alpha-D-ribose 1-phosphate + adenine. It carries out the reaction S-methyl-5'-thioadenosine + phosphate = 5-(methylsulfanyl)-alpha-D-ribose 1-phosphate + adenine. The catalysed reaction is inosine + phosphate = alpha-D-ribose 1-phosphate + hypoxanthine. It catalyses the reaction adenosine + H2O + H(+) = inosine + NH4(+). Purine nucleoside enzyme that catalyzes the phosphorolysis of adenosine and inosine nucleosides, yielding D-ribose 1-phosphate and the respective free bases, adenine and hypoxanthine. Also catalyzes the phosphorolysis of S-methyl-5'-thioadenosine into adenine and S-methyl-5-thio-alpha-D-ribose 1-phosphate. Also has adenosine deaminase activity. This chain is Purine nucleoside phosphorylase YlmD (ylmD), found in Bacillus subtilis (strain 168).